The chain runs to 373 residues: MEDFIYYNGKKYRKGYTTGTCAAAAAKACVEMILTQEEVSAVQVTTTGGTILEIPVAYQKFSKDKATAAVQKDGGDDIDATHGMWIFVDVDLTDNAEVVLDGGVGIGRATQKGISVAVGEAAINPAPRKNILATVRESLGENRGAKILVYAPEGEERAKRTMNSNLGIIGGISILGTTGIVTPMSDEGWKKSLSMELEMKRNQGLDQIILVPGNYGDDFVQNTLGFSSGNIVSMSNFVGYMLKETQRLAFKKVLMVGHFGKLVKVSAGIFTTYSKDADARAEILVANLALLGAPLSLLQAVEKCNTTEAAGELIEEAGFTQVYDVIVQKIKARSERFLKFTKPSVEVDVVTFSTERGLLAATKDIDVLREEWR.

This sequence belongs to the CbiD family.

It catalyses the reaction Co-precorrin-5B + S-adenosyl-L-methionine = Co-precorrin-6A + S-adenosyl-L-homocysteine. It participates in cofactor biosynthesis; adenosylcobalamin biosynthesis; cob(II)yrinate a,c-diamide from sirohydrochlorin (anaerobic route): step 6/10. Its function is as follows. Catalyzes the methylation of C-1 in cobalt-precorrin-5B to form cobalt-precorrin-6A. This is Cobalt-precorrin-5B C(1)-methyltransferase from Listeria monocytogenes serotype 4b (strain CLIP80459).